A 261-amino-acid chain; its full sequence is Dienlactone hydrolase 1 (261 aa).

Active-site residues include Cys-147, Asp-194, and His-226.

The protein belongs to the dienelactone hydrolase family.

It functions in the pathway xenobiotic degradation. Its function is as follows. Dienlactone hydrolase; part of the Fusarium detoxification of benzoxazolinone cluster 1 (FDB1) involved in the degradation of benzoxazolinones produced by the host plant. Maize, wheat, and rye produce the 2 benzoxazinone phytoanticipins 2,4-dihy-droxy-7-methoxy-1,4-benzoxazin-3-one (DIMBOA) and 2,4-dihydroxy-1,4-benzoxazin-3-one (DIBOA) that, due to their inherent instability once released, spontaneously degrade to the more stable corresponding benzoxazolinones, 6-methoxy-2-benzoxazolinone (MBOA) and 2-benzoxazolinone (BOA), respectively. The first step in the detoxification of benzoxazolinones involves the hydrolysis of the cyclic ester bond of benzoxazolinones by the FDB1 cluster gamma-lactamase MBL1 to aminophenols. MBL1 is able to convert BOA into 2-aminophenol (2-AP), as well as MBOA into 5-methoxy-2-aminophenol (2-AMP). The FDB2 cluster N-malonyltransferase FDB2/NAT1 then metabolizes aminophenols via N-malonylation to non-toxic malonamic acids. FDB2/NAT1 converts 2-AP into N-(2-hydroxyphenyl) malonamic acid (HPMA) and 2-AMP into N-(2-hydroxy-4-methoxyphenyl) malonamic acid (HMPMA). The duplicated dienlactone hydrolases DLH1 and DLH2 may provide redundant function for hydrolyzing the lactone moiety in the BOA molecule. The roles of the amidases and other enzymes encoded by the 2 FDB clusters have not been identified so far. This chain is Dienlactone hydrolase 1, found in Gibberella moniliformis (strain M3125 / FGSC 7600) (Maize ear and stalk rot fungus).